Consider the following 1203-residue polypeptide: Regulator of telomere elongation helicase 1 (1203 aa).

The Helicase ATP-binding domain maps to 7–296 (NGVTVDFPFQ…ARVTQQGELQ (290 aa)). 42–49 (SPTGTGKT) lines the ATP pocket. Residues cysteine 145, cysteine 163, cysteine 172, and cysteine 207 each coordinate [4Fe-4S] cluster. The Nuclear localization signal motif lies at 151–167 (KKQESNHMQISLCRKKV). The short motif at 250–253 (DEAH) is the DEAH box element. A Nuclear localization signal motif is present at residues 871-877 (QKGGRKK). Disordered regions lie at residues 998–1020 (QLDP…TSKG) and 1120–1203 (TTGK…RSKQ). Over residues 1123-1134 (KDLELEGPRDES) the composition is skewed to basic and acidic residues. A PIP-box motif is present at residues 1160–1167 (QSKISSFF). Over residues 1169–1181 (QRPDESVRSDDTT) the composition is skewed to basic and acidic residues.

It belongs to the helicase family. RAD3/XPD subfamily. Interacts with TERF1. Interacts (via PIP-box) with PCNA; the interaction is direct and essential for suppressing telomere fragility. Interacts with MMS19; the interaction mediates the association of RTEL1 with the cytosolic iron-sulfur protein assembly (CIA) complex.

The protein localises to the nucleus. It carries out the reaction ATP + H2O = ADP + phosphate + H(+). Functionally, a probable ATP-dependent DNA helicase implicated in telomere-length regulation, DNA repair and the maintenance of genomic stability. Acts as an anti-recombinase to counteract toxic recombination and limit crossover during meiosis. Regulates meiotic recombination and crossover homeostasis by physically dissociating strand invasion events and thereby promotes noncrossover repair by meiotic synthesis dependent strand annealing (SDSA) as well as disassembly of D loop recombination intermediates. Also disassembles T loops and prevents telomere fragility by counteracting telomeric G4-DNA structures, which together ensure the dynamics and stability of the telomere. The chain is Regulator of telomere elongation helicase 1 (Rtel1) from Mus spretus (Western Mediterranean mouse).